Here is a 241-residue protein sequence, read N- to C-terminus: ATP synthase subunit a (241 aa).

A run of 6 helical transmembrane segments spans residues 19–39, 80–100, 106–126, 135–155, 177–197, and 203–223; these read AVLI…AKMA, LVAA…IPGF, NINV…YEGI, FAHF…IEIV, LFLW…AYLL, and LLQT…AVAI.

This sequence belongs to the ATPase A chain family. F-type ATPases have 2 components, CF(1) - the catalytic core - and CF(0) - the membrane proton channel. CF(1) has five subunits: alpha(3), beta(3), gamma(1), delta(1), epsilon(1). CF(0) has three main subunits: a(1), b(2) and c(9-12). The alpha and beta chains form an alternating ring which encloses part of the gamma chain. CF(1) is attached to CF(0) by a central stalk formed by the gamma and epsilon chains, while a peripheral stalk is formed by the delta and b chains.

Its subcellular location is the cell inner membrane. Its function is as follows. Key component of the proton channel; it plays a direct role in the translocation of protons across the membrane. The sequence is that of ATP synthase subunit a from Sulfurovum sp. (strain NBC37-1).